The following is a 251-amino-acid chain: Uroporphyrinogen-III C-methyltransferase (251 aa).

Residues proline 17, 93–95, 123–124, methionine 177, and alanine 206 each bind S-adenosyl-L-homocysteine; these read GGD and TS.

Belongs to the precorrin methyltransferase family.

Its subcellular location is the plastid. The protein resides in the chloroplast. It catalyses the reaction uroporphyrinogen III + 2 S-adenosyl-L-methionine = precorrin-2 + 2 S-adenosyl-L-homocysteine + H(+). It functions in the pathway cofactor biosynthesis; adenosylcobalamin biosynthesis; precorrin-2 from uroporphyrinogen III: step 1/1. The protein operates within porphyrin-containing compound metabolism; siroheme biosynthesis; precorrin-2 from uroporphyrinogen III: step 1/1. Catalyzes the two successive C-2 and C-7 methylation reactions involved in the conversion of uroporphyrinogen III to precorrin-2 via the intermediate formation of precorrin-1. It is a step in the biosynthesis of both cobalamin (vitamin B12) and siroheme. This is Uroporphyrinogen-III C-methyltransferase (cobA) from Cyanidium caldarium (Red alga).